A 302-amino-acid chain; its full sequence is tRNA dimethylallyltransferase (302 aa).

10-17 lines the ATP pocket; it reads GPTATGKS. 12–17 serves as a coordination point for substrate; sequence TATGKS. Positions 35–38 are interaction with substrate tRNA; the sequence is DSRQ.

This sequence belongs to the IPP transferase family. In terms of assembly, monomer. Requires Mg(2+) as cofactor.

The enzyme catalyses adenosine(37) in tRNA + dimethylallyl diphosphate = N(6)-dimethylallyladenosine(37) in tRNA + diphosphate. Its function is as follows. Catalyzes the transfer of a dimethylallyl group onto the adenine at position 37 in tRNAs that read codons beginning with uridine, leading to the formation of N6-(dimethylallyl)adenosine (i(6)A). The polypeptide is tRNA dimethylallyltransferase (Acaryochloris marina (strain MBIC 11017)).